The following is a 498-amino-acid chain: Neoxanthin synthase, chloroplastic (498 aa).

The N-terminal 42 residues, 1–42 (METLLKPFPSLLLSSPTPYRSIVQQNPSFLSPTTKKKSRKCL), are a transit peptide targeting the chloroplast.

It belongs to the lycopene cyclase family. As to expression, expressed exclusively in chromoplast-containing tissues of flowers and fruits. Expressed in preanthesis flowers.

The protein resides in the plastid. Its subcellular location is the chloroplast. The enzyme catalyses all-trans-violaxanthin = all-trans-neoxanthin. It catalyses the reaction a carotenoid psi-end group = a carotenoid beta-end derivative. Its pathway is carotenoid biosynthesis; neoxanthin biosynthesis. It participates in carotenoid biosynthesis; beta-carotene biosynthesis. Functionally, involved in the synthesis of neoxanthin, the last product of carotenoid synthesis and a precursor of abscisic acid. Involved in the beta-carotene biosynthesis. The polypeptide is Neoxanthin synthase, chloroplastic (Solanum lycopersicum (Tomato)).